The chain runs to 159 residues: Neuroglobin (159 aa).

Residues 3-151 (KLSEKDKGLI…VVSAMTRGWA (149 aa)) enclose the Globin domain. Heme b-binding residues include histidine 66 and histidine 98.

This sequence belongs to the globin family. Monomer. Homodimers and homotetramers. Mainly monomeric but also detected as part of homodimers and homotetramers. As to expression, detected in brain, eye and gill, but not in muscle and blood (at protein level). Particularly high expression in the periventral zone of tectum opticum, with significant expression detected in white matter, preglomerular nucleus, posterior tubular nucleus, torus longitudinalis, hypothalamus, pituitary gland, posterior tuberculum, hypothalamus, synencephalon and formatio reticularis. Detected also in brain regions of the visual system, predominantly in parts of tectum opticum and torus semicircularis, area dorsalis telencephali and medulla oblongata. Strong expression observed in sensory epithelium of peripheral olfactory organ, and outer and inner nuclear layers and ganglion cell layer of retina.

Its subcellular location is the cytoplasm. The protein localises to the cytosol. It is found in the mitochondrion matrix. It carries out the reaction Fe(III)-heme b-[protein] + nitric oxide + H2O = Fe(II)-heme b-[protein] + nitrite + 2 H(+). Functionally, monomeric globin with a bis-histidyl six-coordinate heme-iron atom through which it can bind dioxygen, carbon monoxide and nitric oxide. Could help transport oxygen and increase its availability to the metabolically active neuronal tissues, though its low quantity in tissues as well as its high affinity for dioxygen, which may limit its oxygen-releasing ability, argue against it. The ferrous/deoxygenated form exhibits a nitrite reductase activity and it could produce nitric oxide which in turn inhibits cellular respiration in response to hypoxia. In its ferrous/deoxygenated state, it may also exhibit GDI (Guanine nucleotide Dissociation Inhibitor) activity toward heterotrimeric G-alpha proteins, thereby regulating signal transduction to facilitate neuroprotective responses in the wake of hypoxia and associated oxidative stress. The protein is Neuroglobin (ngb) of Danio rerio (Zebrafish).